The primary structure comprises 96 residues: Aspartyl/glutamyl-tRNA(Asn/Gln) amidotransferase subunit C (96 aa).

Belongs to the GatC family. As to quaternary structure, heterotrimer of A, B and C subunits.

It catalyses the reaction L-glutamyl-tRNA(Gln) + L-glutamine + ATP + H2O = L-glutaminyl-tRNA(Gln) + L-glutamate + ADP + phosphate + H(+). It carries out the reaction L-aspartyl-tRNA(Asn) + L-glutamine + ATP + H2O = L-asparaginyl-tRNA(Asn) + L-glutamate + ADP + phosphate + 2 H(+). Allows the formation of correctly charged Asn-tRNA(Asn) or Gln-tRNA(Gln) through the transamidation of misacylated Asp-tRNA(Asn) or Glu-tRNA(Gln) in organisms which lack either or both of asparaginyl-tRNA or glutaminyl-tRNA synthetases. The reaction takes place in the presence of glutamine and ATP through an activated phospho-Asp-tRNA(Asn) or phospho-Glu-tRNA(Gln). The polypeptide is Aspartyl/glutamyl-tRNA(Asn/Gln) amidotransferase subunit C (Neisseria gonorrhoeae (strain ATCC 700825 / FA 1090)).